The primary structure comprises 354 residues: Protein sex-lethal (354 aa).

The tract at residues 1 to 20 (MYGNNNPGSNNNNGGYPPYG) is disordered. 2 RRM domains span residues 127 to 205 (TNLI…YARP) and 213 to 293 (TNLY…LAQE).

As to quaternary structure, part of a complex containing fl(2)d, Sxl and vir. Interacts with nito. Interacts with Unr; cooperates with Sxl to prevent translation of msl-2 transcripts. Interacts with how; promoting nuclear retention of msl-2 transcripts. The embryo-specific isoform is not expressed in the pole cells, which are the progenitors of the germline.

The protein resides in the nucleus. It is found in the cytoplasm. Its function is as follows. Sex determination switch protein, which controls sexual development and dosage compensation in females. Sxl protein is only active in females: it is inactive in males throughout development. Acts as a mRNA-binding protein, which specifically binds to a subset of pre-mRNAs and mRNAs and regulates their processing and/or translation. Promotes sexual development by controlling the female-specific alternative splicing of the transformer (tra) pre-mRNA: binds tightly to a characteristic uridine-rich polypyrimidine tract at the non-sex specific 3' splice site in one of the tra introns, preventing the general splicing factor U2AF from binding to this site and forcing it to bind to the female-specific 3' splice site. Acts as an inhibitor of dosage compensation in females by preventing production of msl-2 protein, an essential component of the MSL complex, the complex that mediates X-chromosome dosage compensation. Specifially binds to uridine stretches in both the 5'- and 3'-UTR of msl-2 transcripts. Sxl first acts at the splicing level by promoting retention of an intron in the 5' UTR of msl-2 pre-mRNA. The retained intron contains Sxl-binding sites that are required for subsequent steps of repression: after msl-2 mRNA export into the cytoplasm, Sxl coordinates its translational repression by targeting early steps of translation initiation. Together with how, Sxl also prevents production of msl-2 protein by preventing nuclear export of msl-2 transcripts. The chain is Protein sex-lethal from Drosophila subobscura (Fruit fly).